Here is a 586-residue protein sequence, read N- to C-terminus: Serine/threonine-protein phosphatase 2A 56 kDa regulatory subunit delta isoform (586 aa).

Positions 1–80 are disordered; it reads MSPSPSSSGK…QSSSRFNLSK (80 aa). A run of 6 repeats spans residues 21–22, 23–24, 25–26, 27–28, 29–30, and 31–32. Residues 21-36 form an 8 X 2 AA approximate tandem repeats of Q-P region; that stretch reads QPQPQPQPQPQPQSQP. Residues 23 to 35 show a composition bias toward pro residues; the sequence is QPQPQPQPQPQSQ. Residues 33 to 34 form a 7; approximate repeat; it reads QS. The stretch at 35–36 is repeat 8; sequence QP. Low complexity predominate over residues 36 to 45; sequence PPSSNKRPSN. The residue at position 47 (T47) is a Phosphothreonine. 3 positions are modified to phosphoserine: S72, S73, and S74. Residues 507–514 carry the SH3-binding; class I motif; it reads RAPPPLPP. The short motif at 532–549 is the Nuclear localization signal element; it reads KRTVETEAVQMLKDIKKE. A phosphoserine mark is found at S557 and S582.

This sequence belongs to the phosphatase 2A regulatory subunit B56 family. PP2A consists of a common heterodimeric core enzyme, composed of a 36 kDa catalytic subunit (subunit C) and a 65 kDa constant regulatory subunit (PR65 or subunit A), that associates with a variety of regulatory subunits. Proteins that associate with the core dimer include three families of regulatory subunits B (the R2/B/PR55/B55, R3/B''/PR72/PR130/PR59 and R5/B'/B56 families), the 48 kDa variable regulatory subunit, viral proteins, and cell signaling molecules. Interacts with the PP2A A subunit PPP2R1A. Interacts with SGO1. Interacts with ADCY8. Highly expressed in brain.

The protein resides in the nucleus. Its function is as follows. The B regulatory subunit might modulate substrate selectivity and catalytic activity, and might also direct the localization of the catalytic enzyme to a particular subcellular compartment. This is Serine/threonine-protein phosphatase 2A 56 kDa regulatory subunit delta isoform (PPP2R5D) from Oryctolagus cuniculus (Rabbit).